The following is a 373-amino-acid chain: UDP-N-acetylenolpyruvoylglucosamine reductase (373 aa).

The 174-residue stretch at 30-203 folds into the FAD-binding PCMH-type domain; that stretch reads LACMADSVVT…SRVGFRLHTD (174 aa). The active site involves R180. S258 (proton donor) is an active-site residue. The active site involves E356.

This sequence belongs to the MurB family. The cofactor is FAD.

The protein resides in the cytoplasm. It catalyses the reaction UDP-N-acetyl-alpha-D-muramate + NADP(+) = UDP-N-acetyl-3-O-(1-carboxyvinyl)-alpha-D-glucosamine + NADPH + H(+). It participates in cell wall biogenesis; peptidoglycan biosynthesis. Its function is as follows. Cell wall formation. This Psychrobacter cryohalolentis (strain ATCC BAA-1226 / DSM 17306 / VKM B-2378 / K5) protein is UDP-N-acetylenolpyruvoylglucosamine reductase.